We begin with the raw amino-acid sequence, 95 residues long: Acylphosphatase (95 aa).

The Acylphosphatase-like domain occupies 9 to 95; it reads RLTAWVHGRV…KGGLTGFVER (87 aa). Residues arginine 24 and asparagine 42 contribute to the active site.

It belongs to the acylphosphatase family.

It catalyses the reaction an acyl phosphate + H2O = a carboxylate + phosphate + H(+). The polypeptide is Acylphosphatase (acyP) (Saccharopolyspora erythraea (strain ATCC 11635 / DSM 40517 / JCM 4748 / NBRC 13426 / NCIMB 8594 / NRRL 2338)).